A 237-amino-acid polypeptide reads, in one-letter code: Phosphoribosylaminoimidazole-succinocarboxamide synthase (237 aa).

This sequence belongs to the SAICAR synthetase family.

The catalysed reaction is 5-amino-1-(5-phospho-D-ribosyl)imidazole-4-carboxylate + L-aspartate + ATP = (2S)-2-[5-amino-1-(5-phospho-beta-D-ribosyl)imidazole-4-carboxamido]succinate + ADP + phosphate + 2 H(+). The protein operates within purine metabolism; IMP biosynthesis via de novo pathway; 5-amino-1-(5-phospho-D-ribosyl)imidazole-4-carboxamide from 5-amino-1-(5-phospho-D-ribosyl)imidazole-4-carboxylate: step 1/2. In Campylobacter fetus subsp. fetus (strain 82-40), this protein is Phosphoribosylaminoimidazole-succinocarboxamide synthase.